The sequence spans 244 residues: Geranylgeranylglyceryl phosphate synthase (244 aa).

Mg(2+) is bound by residues Asp21 and Thr50. Residues 168–174 (YLEAGSG), 200–201 (GG), and 222–223 (GN) each bind sn-glycerol 1-phosphate.

This sequence belongs to the GGGP/HepGP synthase family. Group II subfamily. Mg(2+) is required as a cofactor.

It localises to the cytoplasm. The catalysed reaction is sn-glycerol 1-phosphate + (2E,6E,10E)-geranylgeranyl diphosphate = sn-3-O-(geranylgeranyl)glycerol 1-phosphate + diphosphate. It functions in the pathway membrane lipid metabolism; glycerophospholipid metabolism. Prenyltransferase that catalyzes the transfer of the geranylgeranyl moiety of geranylgeranyl diphosphate (GGPP) to the C3 hydroxyl of sn-glycerol-1-phosphate (G1P). This reaction is the first ether-bond-formation step in the biosynthesis of archaeal membrane lipids. The sequence is that of Geranylgeranylglyceryl phosphate synthase from Sulfurisphaera tokodaii (strain DSM 16993 / JCM 10545 / NBRC 100140 / 7) (Sulfolobus tokodaii).